The chain runs to 154 residues: Aspartate 1-decarboxylase 1 (154 aa).

Catalysis depends on Ser-26, which acts as the Schiff-base intermediate with substrate; via pyruvic acid. Ser-26 is modified (pyruvic acid (Ser)). A substrate-binding site is contributed by Thr-58. Tyr-59 acts as the Proton donor in catalysis. Residue 74-76 (GAA) participates in substrate binding. Residues 129–154 (VGLVRGDTNSPQPSLSEQAGDPRRAQ) are disordered. Over residues 135–145 (DTNSPQPSLSE) the composition is skewed to polar residues.

Belongs to the PanD family. In terms of assembly, heterooctamer of four alpha and four beta subunits. Pyruvate serves as cofactor. Post-translationally, is synthesized initially as an inactive proenzyme, which is activated by self-cleavage at a specific serine bond to produce a beta-subunit with a hydroxyl group at its C-terminus and an alpha-subunit with a pyruvoyl group at its N-terminus.

It is found in the cytoplasm. It carries out the reaction L-aspartate + H(+) = beta-alanine + CO2. It participates in cofactor biosynthesis; (R)-pantothenate biosynthesis; beta-alanine from L-aspartate: step 1/1. Catalyzes the pyruvoyl-dependent decarboxylation of aspartate to produce beta-alanine. The sequence is that of Aspartate 1-decarboxylase 1 from Frankia casuarinae (strain DSM 45818 / CECT 9043 / HFP020203 / CcI3).